Here is a 1249-residue protein sequence, read N- to C-terminus: Hyphally regulated cell wall protein 3 (1249 aa).

The first 20 residues, 1–20 (MHLFKRIALTLWLIISSTLA), serve as a signal peptide directing secretion. N373 carries an N-linked (GlcNAc...) asparagine glycan. Residues 383-415 (FPTTSQSSSSETVASSSQPDSSSTEPSAFPSST) show a composition bias toward low complexity. 2 disordered regions span residues 383-729 (FPTT…SGII) and 883-1217 (GLST…SSAS). Over residues 416 to 428 (GDSSAEPSITSDY) the composition is skewed to polar residues. Low complexity predominate over residues 429 to 716 (SSSELSVVPS…SEYTATWTTT (288 aa)). Residue N681 is glycosylated (N-linked (GlcNAc...) asparagine). Polar residues-rich tracts occupy residues 717 to 729 (NSDG…SGII) and 883 to 935 (GLST…PVPT). N891, N940, N944, N948, N952, N956, N960, N966, N970, N974, N984, N988, N992, N996, N1000, N1010, N1014, N1018, N1022, N1026, N1032, N1046, N1050, N1058, N1062, N1072, N1076, N1080, N1086, N1090, N1094, N1098, N1114, N1118, N1122, N1128, N1132, N1136, N1140, N1150, N1154, N1158, N1172, N1180, and N1186 each carry an N-linked (GlcNAc...) asparagine glycan. Over residues 941–959 (GSNNGSDNGSNNGSNNGSN) the composition is skewed to low complexity. Positions 960–982 (NGSGSGNGSNNGSNNGSGSGNGF) are enriched in gly residues. Positions 983–1043 (NNGSDNGSNN…SNSGSDSGNG (61 aa)) are enriched in low complexity. The segment covering 1062 to 1078 (NGSGSGGESNNGSGNGS) has biased composition (gly residues). Residues 1079–1097 (DNGSSPDNGSNNGSNNGSN) show a composition bias toward low complexity. Residues 1139 to 1167 (NNGSNSGSNSDNGSNNSSGNGSSSDLGSV) are compositionally biased toward low complexity. 2 stretches are compositionally biased toward low complexity: residues 1175–1194 (NEGS…GAGA) and 1205–1217 (SPSA…SSAS). Residue N1225 is glycosylated (N-linked (GlcNAc...) asparagine). N1225 carries GPI-anchor amidated asparagine lipidation. The propeptide at 1226-1249 (GSGKLLNGKVLTLSVLSSMVVVFL) is removed in mature form.

The protein belongs to the HYR1/IFF family. In terms of processing, the GPI-anchor is attached to the protein in the endoplasmic reticulum and serves to target the protein to the cell surface. There, the glucosamine-inositol phospholipid moiety is cleaved off and the GPI-modified mannoprotein is covalently attached via its lipidless GPI glycan remnant to the 1,6-beta-glucan of the outer cell wall layer.

It localises to the secreted. The protein resides in the cell wall. Its subcellular location is the membrane. Its function is as follows. GPI-anchored cell wall protein involved in cell wall organization, hyphal growth, as well as in host-fungal interaction and virulence. The sequence is that of Hyphally regulated cell wall protein 3 (HYR3) from Candida albicans (strain SC5314 / ATCC MYA-2876) (Yeast).